Consider the following 257-residue polypeptide: MPKRNYDTAFSTPMSNVRRRLTFDTPLSLPATAGSVPASAKRRRWTNRPMWRKPRYYRLYRSPDVPRGCEGPCKVQSFEAKHDISHVGKVICVTDVTRGMGITHRVGKRFCVKSIWVTGKIWMDENIKTKNHTNTVMFKLVRDRRPFGTPQDFGQVFNMYDNEPSTATVKNDLRDRYQVVRKFQATVTGGQYASKEQAIVSKFYRVNNYVVYNHQEAAKYENHTENALLLYMACTHASNPVYATLKIRIYFYDSISN.

A Bipartite nuclear localization signal motif is present at residues 3 to 20 (KRNYDTAFSTPMSNVRRR). The Nuclear localization signal signature appears at 41-55 (KRRRWTNRPMWRKPR). The segment at 69–86 (CEGPCKVQSFEAKHDISH) is a zinc-finger region. The short motif at 102–123 (ITHRVGKRFCVKSIWVTGKIWM) is the Nuclear export signal element. The Bipartite nuclear localization signal motif lies at 201 to 248 (SKFYRVNNYVVYNHQEAAKYENHTENALLLYMACTHASNPVYATLKIR).

This sequence belongs to the geminiviridae capsid protein family. As to quaternary structure, homomultimer. Binds to single-stranded and double-stranded viral DNA. Interacts (via nuclear localization signals) with host importin alpha-1a.

It is found in the virion. The protein localises to the host nucleus. Functionally, encapsidates the viral DNA into characteristic twinned ('geminate') particles. Binds the genomic viral ssDNA and shuttles it into and out of the cell nucleus. The CP of bipartite geminiviruses is not required for cell-to-cell or systemic movement. In Glycine max (Soybean), this protein is Capsid protein.